Consider the following 143-residue polypeptide: Flagellar assembly factor FliW (143 aa).

This sequence belongs to the FliW family. In terms of assembly, interacts with translational regulator CsrA and flagellin(s).

The protein resides in the cytoplasm. Functionally, acts as an anti-CsrA protein, binds CsrA and prevents it from repressing translation of its target genes, one of which is flagellin. Binds to flagellin and participates in the assembly of the flagellum. The sequence is that of Flagellar assembly factor FliW from Clostridium botulinum (strain Okra / Type B1).